The chain runs to 619 residues: Chitinase C (619 aa).

A signal peptide spans 1–30 (MRFRHKAAALAATLALPLAGLVGLASPAQA). Positions 31 to 134 (ATSATATFAK…KLNGGSCDGT (104 aa)) constitute a CBM2 domain. Residues 144 to 229 (APGTPTASNI…GAVKVTTTGG (86 aa)) form the Fibronectin type-III domain. Positions 212 to 236 (ADQTGPASGAVKVTTTGGGDGGNPG) are disordered. Gly residues predominate over residues 227–236 (TGGGDGGNPG). One can recognise a GH18 domain in the interval 240 to 619 (EVKMGYFTNW…TPAVRTTRRH (380 aa)). Chitin is bound by residues 312–313 (DQ) and 339–342 (GGWT). Residue glutamate 382 is the Proton donor of the active site. Chitin contacts are provided by residues tyrosine 383, 449–452 (MTYD), and tryptophan 589.

It belongs to the glycosyl hydrolase 18 family. Chitinase class II subfamily.

It carries out the reaction Random endo-hydrolysis of N-acetyl-beta-D-glucosaminide (1-&gt;4)-beta-linkages in chitin and chitodextrins.. The protein is Chitinase C (chiC) of Streptomyces lividans.